The chain runs to 1397 residues: DNA-directed RNA polymerase subunit beta' (1397 aa).

Positions 75, 77, 90, and 93 each coordinate Zn(2+). D465, D467, and D469 together coordinate Mg(2+). Positions 819, 893, 900, and 903 each coordinate Zn(2+).

The protein belongs to the RNA polymerase beta' chain family. As to quaternary structure, the RNAP catalytic core consists of 2 alpha, 1 beta, 1 beta' and 1 omega subunit. When a sigma factor is associated with the core the holoenzyme is formed, which can initiate transcription. Mg(2+) is required as a cofactor. Zn(2+) serves as cofactor.

The enzyme catalyses RNA(n) + a ribonucleoside 5'-triphosphate = RNA(n+1) + diphosphate. Functionally, DNA-dependent RNA polymerase catalyzes the transcription of DNA into RNA using the four ribonucleoside triphosphates as substrates. This Acinetobacter baumannii (strain SDF) protein is DNA-directed RNA polymerase subunit beta'.